The following is a 118-amino-acid chain: UPF0295 protein BcerKBAB4_0454 (118 aa).

Helical transmembrane passes span 12–32 and 43–63; these read IRTF…LGVF and FMMV…WIGM.

Belongs to the UPF0295 family.

Its subcellular location is the cell membrane. This chain is UPF0295 protein BcerKBAB4_0454, found in Bacillus mycoides (strain KBAB4) (Bacillus weihenstephanensis).